Reading from the N-terminus, the 961-residue chain is Leucine--tRNA ligase (961 aa).

Residues 41–51 (PYLNGNLHAGH) carry the 'HIGH' region motif. A 'KMSKS' region motif is present at residues 632 to 636 (KMSKS). Residue K635 participates in ATP binding.

This sequence belongs to the class-I aminoacyl-tRNA synthetase family.

It localises to the cytoplasm. It catalyses the reaction tRNA(Leu) + L-leucine + ATP = L-leucyl-tRNA(Leu) + AMP + diphosphate. The chain is Leucine--tRNA ligase from Methanosarcina acetivorans (strain ATCC 35395 / DSM 2834 / JCM 12185 / C2A).